Consider the following 123-residue polypeptide: Class I hydrophobin pri2 (123 aa).

A signal peptide spans 1 to 18 (MVAIKSLAILALPVMAMA). Cystine bridges form between Cys31/Cys102, Cys38/Cys96, Cys39/Cys84, and Cys103/Cys116. N-linked (GlcNAc...) asparagine glycosylation is found at Asn33 and Asn40.

It belongs to the fungal hydrophobin family. As to quaternary structure, self-assembles to form functional amyloid fibrils called rodlets. Self-assembly into fibrillar rodlets occurs spontaneously at hydrophobic:hydrophilic interfaces and the rodlets further associate laterally to form amphipathic monolayers.

The protein resides in the secreted. It localises to the cell wall. Aerial growth, conidiation, and dispersal of filamentous fungi in the environment rely upon a capability of their secreting small amphipathic proteins called hydrophobins (HPBs) with low sequence identity. Class I can self-assemble into an outermost layer of rodlet bundles on aerial cell surfaces, conferring cellular hydrophobicity that supports fungal growth, development and dispersal; whereas Class II form highly ordered films at water-air interfaces through intermolecular interactions but contribute nothing to the rodlet structure. The protein is Class I hydrophobin pri2 of Cyclocybe aegerita (Black poplar mushroom).